We begin with the raw amino-acid sequence, 417 residues long: Gamma-glutamyl phosphate reductase (417 aa).

The protein belongs to the gamma-glutamyl phosphate reductase family.

It is found in the cytoplasm. It carries out the reaction L-glutamate 5-semialdehyde + phosphate + NADP(+) = L-glutamyl 5-phosphate + NADPH + H(+). It participates in amino-acid biosynthesis; L-proline biosynthesis; L-glutamate 5-semialdehyde from L-glutamate: step 2/2. Functionally, catalyzes the NADPH-dependent reduction of L-glutamate 5-phosphate into L-glutamate 5-semialdehyde and phosphate. The product spontaneously undergoes cyclization to form 1-pyrroline-5-carboxylate. This Escherichia coli O157:H7 protein is Gamma-glutamyl phosphate reductase.